Consider the following 33-residue polypeptide: Alpha-amanitin proprotein (33 aa).

Positions 1–10 are excised as a propeptide; it reads MSDINATRLP. Ile-11 carries the post-translational modification (3R,4R)-4,5-dihydroxyisoleucine; in form alpha-amanitin. Ile-11 is subject to (3R,4S)-4-hydroxyisoleucine; in form gamma-amanitin. A cross-link (cyclopeptide (Ile-Pro)) is located at residues 11–18; the sequence is IWGIGCNP. The 2'-cysteinyl-6'-hydroxytryptophan sulfoxide (Trp-Cys) cross-link spans 12–16; it reads WGIGC. Pro-18 is modified (4-hydroxyproline). A propeptide spanning residues 19–33 is cleaved from the precursor; sequence SVGDEVTALLTSGEA.

Belongs to the MSDIN fungal toxin family. In terms of processing, processed by the macrocyclase-peptidase enzyme POPB to yield a toxic cyclic decapeptide. POPB first removes 10 residues from the N-terminus. Conformational trapping of the remaining peptide forces the enzyme to release this intermediate rather than proceed to macrocyclization. The enzyme rebinds the remaining peptide in a different conformation and catalyzes macrocyclization of the N-terminal 8 residues.

Its function is as follows. Major toxin belonging to the bicyclic octapeptides amatoxins that acts by binding non-competitively to RNA polymerase II and greatly slowing the elongation of transcripts from target promoters. The protein is Alpha-amanitin proprotein of Amanita fuliginea (East Asian brown death cap).